We begin with the raw amino-acid sequence, 520 residues long: Probable E3 ubiquitin-protein ligase XBOS33 (520 aa).

ANK repeat units lie at residues 44-73 (GLNS…DVNV), 77-106 (CGQT…NVTR), 111-140 (SGRT…PSAP), 185-214 (GGVT…NVSA), and 228-258 (AGST…KLTL). The segment at 327–377 (CAVCLERSCSVAAEGCCHEFCIKCALYLCSTSNTRVEFTGPPGSIPCPLCR) adopts an RING-type zinc-finger fold. Positions 467–479 (QDGSEVQSPQPSH) are enriched in polar residues. Residues 467–493 (QDGSEVQSPQPSHCASMEMDKREQQDL) are disordered. Positions 484–493 (EMDKREQQDL) are enriched in basic and acidic residues.

It catalyses the reaction S-ubiquitinyl-[E2 ubiquitin-conjugating enzyme]-L-cysteine + [acceptor protein]-L-lysine = [E2 ubiquitin-conjugating enzyme]-L-cysteine + N(6)-ubiquitinyl-[acceptor protein]-L-lysine.. The protein operates within protein modification; protein ubiquitination. The protein is Probable E3 ubiquitin-protein ligase XBOS33 (XBOS33) of Oryza sativa subsp. japonica (Rice).